The chain runs to 431 residues: 5-methylthioadenosine/S-adenosylhomocysteine deaminase (431 aa).

H66 and H68 together coordinate Zn(2+). 3 residues coordinate substrate: E95, R147, and H185. H212 provides a ligand contact to Zn(2+). Residues E215 and D300 each contribute to the substrate site. D300 serves as a coordination point for Zn(2+).

It belongs to the metallo-dependent hydrolases superfamily. MTA/SAH deaminase family. It depends on Zn(2+) as a cofactor.

It carries out the reaction S-adenosyl-L-homocysteine + H2O + H(+) = S-inosyl-L-homocysteine + NH4(+). The catalysed reaction is S-methyl-5'-thioadenosine + H2O + H(+) = S-methyl-5'-thioinosine + NH4(+). Its function is as follows. Catalyzes the deamination of 5-methylthioadenosine and S-adenosyl-L-homocysteine into 5-methylthioinosine and S-inosyl-L-homocysteine, respectively. Is also able to deaminate adenosine. This is 5-methylthioadenosine/S-adenosylhomocysteine deaminase from Acetivibrio thermocellus (strain ATCC 27405 / DSM 1237 / JCM 9322 / NBRC 103400 / NCIMB 10682 / NRRL B-4536 / VPI 7372) (Clostridium thermocellum).